Reading from the N-terminus, the 529-residue chain is Bifunctional purine biosynthesis protein PurH (529 aa).

An MGS-like domain is found at 1–148 (MQPPRPVRRA…KNHKDVAIVV (148 aa)).

This sequence belongs to the PurH family.

The catalysed reaction is (6R)-10-formyltetrahydrofolate + 5-amino-1-(5-phospho-beta-D-ribosyl)imidazole-4-carboxamide = 5-formamido-1-(5-phospho-D-ribosyl)imidazole-4-carboxamide + (6S)-5,6,7,8-tetrahydrofolate. It catalyses the reaction IMP + H2O = 5-formamido-1-(5-phospho-D-ribosyl)imidazole-4-carboxamide. It participates in purine metabolism; IMP biosynthesis via de novo pathway; 5-formamido-1-(5-phospho-D-ribosyl)imidazole-4-carboxamide from 5-amino-1-(5-phospho-D-ribosyl)imidazole-4-carboxamide (10-formyl THF route): step 1/1. The protein operates within purine metabolism; IMP biosynthesis via de novo pathway; IMP from 5-formamido-1-(5-phospho-D-ribosyl)imidazole-4-carboxamide: step 1/1. In Sodalis glossinidius (strain morsitans), this protein is Bifunctional purine biosynthesis protein PurH.